A 309-amino-acid chain; its full sequence is Vomeronasal type-1 receptor 52 (309 aa).

Residues 1-19 are Extracellular-facing; sequence MNKDHTLYCSVYIRNAFFS. The helical transmembrane segment at 20–40 threads the bilayer; sequence EIGIGISANSCLLLFHTFMFI. Residues 41-49 are Cytoplasmic-facing; the sequence is RGHRPRLTD. The chain crosses the membrane as a helical span at residues 50–70; that stretch reads LPIGFVALIHLVMLLLAAYIT. Residues 71–93 are Extracellular-facing; that stretch reads EDFFMSSGGWDDITCKLVIFLHR. A disulfide bridge connects residues Cys-85 and Cys-172. Residues 94–114 form a helical membrane-spanning segment; the sequence is FFRSLSVCATCLLSVFQAIIL. Over 115–134 the chain is Cytoplasmic; sequence CPQSSHLAKLKQNSPHQLSY. A helical membrane pass occupies residues 135–155; that stretch reads FFIFLSIFYTSISSHILIAAI. Topologically, residues 156–187 are extracellular; sequence PTQNITFVNLIYITNSCSFLPLSSSMQHTFST. The N-linked (GlcNAc...) asparagine glycan is linked to Asn-159. A helical transmembrane segment spans residues 188–208; it reads LLAFRNVFVIGLMGLSTCYMA. The Cytoplasmic segment spans residues 209-238; that stretch reads TLLCRHKTRSQRLQNSKLSPKATPEQRALR. A helical membrane pass occupies residues 239-259; sequence TILMLMSFFLLMSTFDSIISY. The Extracellular portion of the chain corresponds to 260 to 268; sequence SRTILQGNP. A helical membrane pass occupies residues 269 to 289; it reads LPFCFQILVAHSYAAVSPLLV. The Cytoplasmic portion of the chain corresponds to 290 to 309; it reads LSNEKRITNLLISMYEKIVL.

The protein belongs to the G-protein coupled receptor 1 family.

The protein localises to the cell membrane. Functionally, putative pheromone receptor implicated in the regulation of social and reproductive behavior. In Mus musculus (Mouse), this protein is Vomeronasal type-1 receptor 52 (Vmn1r52).